The sequence spans 88 residues: MFNINLLNQARLESDLDSLGCLDIAEELIEKMMEDVFYSDVAQRIIVQTLAVINNANAKLQATFNILEDEDMETDERSVEFEGISYYE.

This is an uncharacterized protein from Bacillus subtilis (strain 168).